Reading from the N-terminus, the 291-residue chain is Nucleotide-binding protein CMM_1747 (291 aa).

15–22 (GMSGAGRS) is an ATP binding site. 66–69 (DVRG) contacts GTP.

This sequence belongs to the RapZ-like family.

Functionally, displays ATPase and GTPase activities. This Clavibacter michiganensis subsp. michiganensis (strain NCPPB 382) protein is Nucleotide-binding protein CMM_1747.